A 289-amino-acid chain; its full sequence is Protoheme IX farnesyltransferase 2 (289 aa).

The next 9 membrane-spanning stretches (helical) occupy residues 4 to 24 (PGIIFGNLISVAGGFLLAAKG), 28 to 48 (LVLMLASLVGLSLVVASGCAI), 66 to 86 (RVTVTGEIAVGNVLAFGLALG), 99 to 118 (ALALLFAVIGYIVYVGVYSL), 124 to 144 (SVYGTLVGSFSGAVPPVVGYC), 155 to 175 (AILLLMFSLWQMPHSYAIAIF), 199 to 219 (LHIVLYIAVFALVSALLPLAG), 221 to 241 (TGIAFMAVTCATSLWWLAMAL), and 256 to 276 (QVFGFSIITITALSVTMALDF).

It belongs to the UbiA prenyltransferase family. Protoheme IX farnesyltransferase subfamily.

The protein resides in the cell inner membrane. It carries out the reaction heme b + (2E,6E)-farnesyl diphosphate + H2O = Fe(II)-heme o + diphosphate. Its pathway is porphyrin-containing compound metabolism; heme O biosynthesis; heme O from protoheme: step 1/1. Converts heme B (protoheme IX) to heme O by substitution of the vinyl group on carbon 2 of heme B porphyrin ring with a hydroxyethyl farnesyl side group. The sequence is that of Protoheme IX farnesyltransferase 2 from Shewanella baltica (strain OS195).